The following is a 378-amino-acid chain: Chaperone protein DnaJ 2 (378 aa).

Residues 4-68 (DYYGLLGVSR…EKRRIVDLGG (65 aa)) form the J domain. A CR-type zinc finger spans residues 128–210 (GVTKQVTVDT…CVGDGRVRAR (83 aa)). Cys-141, Cys-144, Cys-158, Cys-161, Cys-184, Cys-187, Cys-198, and Cys-201 together coordinate Zn(2+). 4 CXXCXGXG motif repeats span residues 141–148 (CDRCQGKG), 158–165 (CDTCGGRG), 184–191 (CPTCRGVG), and 198–205 (CCQCVGDG).

The protein belongs to the DnaJ family. In terms of assembly, homodimer. Zn(2+) serves as cofactor.

It localises to the cytoplasm. In terms of biological role, participates actively in the response to hyperosmotic and heat shock by preventing the aggregation of stress-denatured proteins and by disaggregating proteins, also in an autonomous, DnaK-independent fashion. Unfolded proteins bind initially to DnaJ; upon interaction with the DnaJ-bound protein, DnaK hydrolyzes its bound ATP, resulting in the formation of a stable complex. GrpE releases ADP from DnaK; ATP binding to DnaK triggers the release of the substrate protein, thus completing the reaction cycle. Several rounds of ATP-dependent interactions between DnaJ, DnaK and GrpE are required for fully efficient folding. Also involved, together with DnaK and GrpE, in the DNA replication of plasmids through activation of initiation proteins. The polypeptide is Chaperone protein DnaJ 2 (Mycobacterium leprae (strain TN)).